We begin with the raw amino-acid sequence, 286 residues long: Phosphatidylserine decarboxylase proenzyme (286 aa).

Active-site charge relay system; for autoendoproteolytic cleavage activity residues include Asp90, His147, and Ser252. The Schiff-base intermediate with substrate; via pyruvic acid; for decarboxylase activity role is filled by Ser252. Pyruvic acid (Ser); by autocatalysis is present on Ser252.

Belongs to the phosphatidylserine decarboxylase family. PSD-B subfamily. Prokaryotic type I sub-subfamily. Heterodimer of a large membrane-associated beta subunit and a small pyruvoyl-containing alpha subunit. It depends on pyruvate as a cofactor. Is synthesized initially as an inactive proenzyme. Formation of the active enzyme involves a self-maturation process in which the active site pyruvoyl group is generated from an internal serine residue via an autocatalytic post-translational modification. Two non-identical subunits are generated from the proenzyme in this reaction, and the pyruvate is formed at the N-terminus of the alpha chain, which is derived from the carboxyl end of the proenzyme. The autoendoproteolytic cleavage occurs by a canonical serine protease mechanism, in which the side chain hydroxyl group of the serine supplies its oxygen atom to form the C-terminus of the beta chain, while the remainder of the serine residue undergoes an oxidative deamination to produce ammonia and the pyruvoyl prosthetic group on the alpha chain. During this reaction, the Ser that is part of the protease active site of the proenzyme becomes the pyruvoyl prosthetic group, which constitutes an essential element of the active site of the mature decarboxylase.

Its subcellular location is the cell membrane. The enzyme catalyses a 1,2-diacyl-sn-glycero-3-phospho-L-serine + H(+) = a 1,2-diacyl-sn-glycero-3-phosphoethanolamine + CO2. It functions in the pathway phospholipid metabolism; phosphatidylethanolamine biosynthesis; phosphatidylethanolamine from CDP-diacylglycerol: step 2/2. Its function is as follows. Catalyzes the formation of phosphatidylethanolamine (PtdEtn) from phosphatidylserine (PtdSer). This Azotobacter vinelandii (strain DJ / ATCC BAA-1303) protein is Phosphatidylserine decarboxylase proenzyme.